A 566-amino-acid polypeptide reads, in one-letter code: Cyclin-dependent kinase-like 2 (566 aa).

The 284-residue stretch at 4–287 (YENLGLVGEG…CAELLHHDFF (284 aa)) folds into the Protein kinase domain. ATP contacts are provided by residues 10-18 (VGEGSYGMV) and Lys33. Positions 45 to 51 (KKIAMRE) match the [NKR]KIAxRE motif. Asp126 functions as the Proton acceptor in the catalytic mechanism. 2 disordered regions span residues 307 to 334 (DARN…GEER) and 545 to 566 (QVSG…EHQH). Residues 320–334 (RKKEKEKDDSLGEER) are compositionally biased toward basic and acidic residues.

Belongs to the protein kinase superfamily. CMGC Ser/Thr protein kinase family. CDC2/CDKX subfamily.

The protein localises to the cytoplasm. It localises to the nucleus. It carries out the reaction L-seryl-[protein] + ATP = O-phospho-L-seryl-[protein] + ADP + H(+). The catalysed reaction is L-threonyl-[protein] + ATP = O-phospho-L-threonyl-[protein] + ADP + H(+). This is Cyclin-dependent kinase-like 2 from Oryctolagus cuniculus (Rabbit).